A 91-amino-acid chain; its full sequence is Acylphosphatase (91 aa).

An Acylphosphatase-like domain is found at 3 to 90 (RVSMIVSGQV…CGYSIFTIRR (88 aa)). Active-site residues include arginine 18 and asparagine 36.

It belongs to the acylphosphatase family.

It carries out the reaction an acyl phosphate + H2O = a carboxylate + phosphate + H(+). The protein is Acylphosphatase (acyP) of Methanospirillum hungatei JF-1 (strain ATCC 27890 / DSM 864 / NBRC 100397 / JF-1).